Here is a 372-residue protein sequence, read N- to C-terminus: GDP-mannose 4,6 dehydratase (372 aa).

Residues 1-20 form a disordered region; sequence MAHAPARCPSARGSGDGEMG. At Ala2 the chain carries N-acetylalanine. Residues 30–35, 55–58, 86–87, 108–112, and Tyr123 contribute to the NADP(+) site; these read GITGQD, RRSS, DL, and LGAQS. The active site involves Thr155. Catalysis depends on nucleophile residues Glu157 and Tyr179. NADP(+)-binding residues include Lys183, His209, and Arg214. The residue at position 323 (Tyr323) is a Phosphotyrosine.

Belongs to the NAD(P)-dependent epimerase/dehydratase family. GDP-mannose 4,6-dehydratase subfamily. NADP(+) serves as cofactor. Highly expressed in pancreas and small intestine. Expressed in thymus, protstate, colon, heart, placenta, liver and kidney. Expressed at low levels in spleen, testis, brain and lung.

It catalyses the reaction GDP-alpha-D-mannose = GDP-4-dehydro-alpha-D-rhamnose + H2O. It functions in the pathway nucleotide-sugar biosynthesis; GDP-L-fucose biosynthesis via de novo pathway; GDP-L-fucose from GDP-alpha-D-mannose: step 1/2. With respect to regulation, inhibited by GDP-fucose. Functionally, catalyzes the conversion of GDP-D-mannose to GDP-4-dehydro-6-deoxy-D-mannose. This Homo sapiens (Human) protein is GDP-mannose 4,6 dehydratase.